Reading from the N-terminus, the 376-residue chain is uncharacterized protein (376 aa).

The first 28 residues, 1–28 (MCKPRVWRIAHTIVHVGALLLGTSQLTT), serve as a signal peptide directing secretion. Cysteine 29 carries N-palmitoyl cysteine lipidation. Cysteine 29 carries S-diacylglycerol cysteine lipidation.

The protein belongs to the TP013X lipoprotein family.

The protein localises to the cell membrane. This is an uncharacterized protein from Treponema pallidum (strain Nichols).